The primary structure comprises 529 residues: Bifunctional purine biosynthesis protein PurH (529 aa).

One can recognise an MGS-like domain in the interval Met-1–Val-148. Lys-287 carries the post-translational modification N6-acetyllysine.

Belongs to the PurH family.

The catalysed reaction is (6R)-10-formyltetrahydrofolate + 5-amino-1-(5-phospho-beta-D-ribosyl)imidazole-4-carboxamide = 5-formamido-1-(5-phospho-D-ribosyl)imidazole-4-carboxamide + (6S)-5,6,7,8-tetrahydrofolate. It carries out the reaction IMP + H2O = 5-formamido-1-(5-phospho-D-ribosyl)imidazole-4-carboxamide. Its pathway is purine metabolism; IMP biosynthesis via de novo pathway; 5-formamido-1-(5-phospho-D-ribosyl)imidazole-4-carboxamide from 5-amino-1-(5-phospho-D-ribosyl)imidazole-4-carboxamide (10-formyl THF route): step 1/1. It participates in purine metabolism; IMP biosynthesis via de novo pathway; IMP from 5-formamido-1-(5-phospho-D-ribosyl)imidazole-4-carboxamide: step 1/1. The chain is Bifunctional purine biosynthesis protein PurH from Escherichia coli O7:K1 (strain IAI39 / ExPEC).